The primary structure comprises 301 residues: Phosducin-like protein (301 aa).

At T2 the chain carries N-acetylthreonine. The segment at 15–60 (YYYSTSEDEDSDHEDKDRGRGAPASSSTPAEAELAGEGISVNTGPK) is disordered. Phosphoserine is present on residues S20 and S25. Low complexity predominate over residues 36–49 (APASSSTPAEAELA). Residues 36 to 299 (APASSSTPAE…TCHSEDSDLE (264 aa)) enclose the Phosducin domain. Residues 158–301 (FKQVLEIPSG…HSEDSDLEID (144 aa)) form a thioredoxin fold region. 3 positions are modified to phosphoserine: S226, S293, and S296.

This sequence belongs to the phosducin family. Interacts with the CCT chaperonin complex. Forms a complex with the beta and gamma subunits of the GTP-binding protein, transducin.

Its subcellular location is the cell projection. It is found in the cilium. Functions as a co-chaperone for CCT in the assembly of heterotrimeric G protein complexes, facilitates the assembly of both Gbeta-Ggamma and RGS-Gbeta5 heterodimers. Also acts as a positive regulator of hedgehog signaling and regulates ciliary function. The chain is Phosducin-like protein (Pdcl) from Rattus norvegicus (Rat).